The sequence spans 915 residues: Hexokinase HKDC1 (915 aa).

The segment at 1 to 20 (MFAVHLVAFYFTKLKEDQIK) is mitochondrial-binding peptide (MBP). Hexokinase domains follow at residues 16–458 (EDQI…MVTA) and 464–903 (QAQR…LITA). ATP contacts are provided by residues Arg-30 and 84–89 (DLGGSK). The hexokinase small subdomain 1 stretch occupies residues 73–207 (DGSENGEFLS…DLDVDILALV (135 aa)). 84-91 (DLGGSKFR) is a binding site for D-glucose 6-phosphate. D-glucose is bound by residues Ser-155, 172–173 (TK), and 208–209 (ND). Positions 208-447 (NDTVGTMMTC…CDVRFLLSES (240 aa)) are hexokinase large subdomain 1. D-glucose 6-phosphate is bound by residues Asp-209 and Thr-232. Residues Asn-235, Glu-260, and 291 to 294 (QLFE) contribute to the D-glucose site. Residue 413 to 415 (DGT) participates in D-glucose 6-phosphate binding. An ATP-binding site is contributed by 425-426 (KR). D-glucose 6-phosphate-binding positions include Ser-449 and 532–536 (DLGGT). The segment at 521–652 (DGTEKGKFLA…EFDLDIVAIV (132 aa)) is hexokinase small subdomain 2. 532–537 (DLGGTN) provides a ligand contact to ATP. Residues 600–601 (SF), 617–618 (TK), and 653–654 (ND) each bind D-glucose. The hexokinase large subdomain 2 stretch occupies residues 653–892 (NDTVGTMMTC…CDVTFMLSED (240 aa)). D-glucose 6-phosphate-binding residues include Asp-654 and Thr-677. ATP is bound at residue Thr-677. D-glucose is bound by residues 679-680 (SN), Glu-705, and Glu-739. ATP-binding positions include 744–745 (GM), 781–785 (TKFLS), and 860–864 (TLYKL). D-glucose 6-phosphate is bound by residues 858 to 860 (DGT) and Ser-894.

Belongs to the hexokinase family. Widely expressed. Detected in retina, brain, cerebellum, liver, lung, kidney, spleen, pancreas and intestine.

It localises to the cytoplasm. The protein localises to the mitochondrion membrane. The protein resides in the photoreceptor inner segment. The catalysed reaction is a D-hexose + ATP = a D-hexose 6-phosphate + ADP + H(+). It carries out the reaction D-glucose + ATP = D-glucose 6-phosphate + ADP + H(+). The protein operates within carbohydrate metabolism; hexose metabolism. Its pathway is carbohydrate degradation; glycolysis; D-glyceraldehyde 3-phosphate and glycerone phosphate from D-glucose: step 1/4. In terms of biological role, catalyzes the phosphorylation of hexose to hexose 6-phosphate, although at very low level compared to other hexokinases. Has low glucose phosphorylating activity compared to other hexokinases. Involved in glucose homeostasis and hepatic lipid accumulation. Required to maintain whole-body glucose homeostasis during pregnancy; however additional evidences are required to confirm this role. The protein is Hexokinase HKDC1 of Mus musculus (Mouse).